The following is a 65-amino-acid chain: Large ribosomal subunit protein bL35 (65 aa).

The disordered stretch occupies residues methionine 1–aspartate 51. Residues histidine 31 to leucine 44 show a composition bias toward basic residues.

This sequence belongs to the bacterial ribosomal protein bL35 family.

This Pediococcus pentosaceus (strain ATCC 25745 / CCUG 21536 / LMG 10740 / 183-1w) protein is Large ribosomal subunit protein bL35.